A 415-amino-acid chain; its full sequence is Squalene synthase 11 (415 aa).

2 helical membrane passes run 281-301 (AIFR…ALCF) and 392-412 (LIII…SNLP).

It belongs to the phytoene/squalene synthase family. Mg(2+) serves as cofactor. The cofactor is Mn(2+).

It is found in the endoplasmic reticulum membrane. The catalysed reaction is 2 (2E,6E)-farnesyl diphosphate + NADH + H(+) = squalene + 2 diphosphate + NAD(+). It carries out the reaction 2 (2E,6E)-farnesyl diphosphate + NADPH + H(+) = squalene + 2 diphosphate + NADP(+). Its pathway is terpene metabolism; lanosterol biosynthesis; lanosterol from farnesyl diphosphate: step 1/3. Functionally, component of the triterpene saponins (e.g. ginsenosides or panaxosides) and phytosterols biosynthetic pathways. Catalyzes the biosynthesis of squalene. In Panax ginseng (Korean ginseng), this protein is Squalene synthase 11.